Here is a 184-residue protein sequence, read N- to C-terminus: Probable gluconokinase (184 aa).

11 to 18 (GVSGSGKS) is an ATP binding site.

Belongs to the gluconokinase GntK/GntV family.

The catalysed reaction is D-gluconate + ATP = 6-phospho-D-gluconate + ADP + H(+). It participates in carbohydrate acid metabolism; D-gluconate degradation. In Mus musculus (Mouse), this protein is Probable gluconokinase (Idnk).